We begin with the raw amino-acid sequence, 355 residues long: Proto-oncogene Wnt-3 (355 aa).

Residues 1–21 (MEPHLLGLLLGLLLGGTRVLA) form the signal peptide. 11 disulfides stabilise this stretch: Cys80/Cys91, Cys131/Cys139, Cys141/Cys158, Cys206/Cys220, Cys208/Cys215, Cys284/Cys315, Cys300/Cys310, Cys314/Cys354, Cys330/Cys345, Cys332/Cys342, and Cys337/Cys338. The N-linked (GlcNAc...) asparagine glycan is linked to Asn90. A lipid anchor (O-palmitoleoyl serine; by PORCN) is attached at Ser212. Asn301 carries an N-linked (GlcNAc...) asparagine glycan.

Belongs to the Wnt family. Forms a soluble 1:1 complex with AFM; this prevents oligomerization and is required for prolonged biological activity. The complex with AFM may represent the physiological form in body fluids. Interacts with PORCN. Interacts with WLS. Palmitoleoylation is required for efficient binding to frizzled receptors. Depalmitoleoylation leads to Wnt signaling pathway inhibition.

The protein resides in the secreted. The protein localises to the extracellular space. It is found in the extracellular matrix. Functionally, ligand for members of the frizzled family of seven transmembrane receptors. Functions in the canonical Wnt signaling pathway that results in activation of transcription factors of the TCF/LEF family. Required for normal gastrulation, formation of the primitive streak, and for the formation of the mesoderm during early embryogenesis. Required for normal formation of the apical ectodermal ridge. Required for normal embryonic development, and especially for limb development. The sequence is that of Proto-oncogene Wnt-3 (WNT3) from Homo sapiens (Human).